The following is a 433-amino-acid chain: MTDLTPREIVSELDRFIIGQKEAKRAVAVALRNRWRRKQLADDLRDEVYPKNILMIGPTGVGKTEISRRLARLAKAPFLKVEATKFTEVGYVGRDVDSIIRDLVDAAIVETRARMREDVKARAAKAAEDRVIEAVAGRDAREQTREMFRGKLKRGELDNTVIEIDVADTSNPMQMLDPTGQGQMGMMNLGEIFGKAFGGRTQRRKMTVAESHDILMNEEADKLLDDEVVKATALEAVQQNGIVFIDEIDKVCARSDMRGADVSREGVQRDLLPLIEGTTVSTKYGPVKTDHILFIASGAFHIAKPSDLLPELQGRLPIRVELRALTEEDFVRILSETDNALTLQYKALMQTEKVGITFTEDGIAALASIAAEVNRSVENIGARRLYTVMERVFEELSFQAPDRSGEEVTVDAAYVEKNLGELARSSDLSRYVL.

ATP is bound by residues Ile18, 60–65, Asp246, Glu311, and Arg383; that span reads GVGKTE.

This sequence belongs to the ClpX chaperone family. HslU subfamily. A double ring-shaped homohexamer of HslV is capped on each side by a ring-shaped HslU homohexamer. The assembly of the HslU/HslV complex is dependent on binding of ATP.

It is found in the cytoplasm. Its function is as follows. ATPase subunit of a proteasome-like degradation complex; this subunit has chaperone activity. The binding of ATP and its subsequent hydrolysis by HslU are essential for unfolding of protein substrates subsequently hydrolyzed by HslV. HslU recognizes the N-terminal part of its protein substrates and unfolds these before they are guided to HslV for hydrolysis. This chain is ATP-dependent protease ATPase subunit HslU, found in Cereibacter sphaeroides (strain ATCC 17029 / ATH 2.4.9) (Rhodobacter sphaeroides).